A 139-amino-acid polypeptide reads, in one-letter code: Large ribosomal subunit protein uL13 (139 aa).

Belongs to the universal ribosomal protein uL13 family. Part of the 50S ribosomal subunit.

This protein is one of the early assembly proteins of the 50S ribosomal subunit, although it is not seen to bind rRNA by itself. It is important during the early stages of 50S assembly. The chain is Large ribosomal subunit protein uL13 from Wolinella succinogenes (strain ATCC 29543 / DSM 1740 / CCUG 13145 / JCM 31913 / LMG 7466 / NCTC 11488 / FDC 602W) (Vibrio succinogenes).